The following is a 1370-amino-acid chain: DNA-directed RNA polymerase subunit beta (1370 aa).

The protein belongs to the RNA polymerase beta chain family. As to quaternary structure, the RNAP catalytic core consists of 2 alpha, 1 beta, 1 beta' and 1 omega subunit. When a sigma factor is associated with the core the holoenzyme is formed, which can initiate transcription.

The catalysed reaction is RNA(n) + a ribonucleoside 5'-triphosphate = RNA(n+1) + diphosphate. In terms of biological role, DNA-dependent RNA polymerase catalyzes the transcription of DNA into RNA using the four ribonucleoside triphosphates as substrates. In Geotalea daltonii (strain DSM 22248 / JCM 15807 / FRC-32) (Geobacter daltonii), this protein is DNA-directed RNA polymerase subunit beta.